The primary structure comprises 334 residues: Protein-methionine-sulfoxide reductase catalytic subunit MsrP (334 aa).

A signal peptide (tat-type signal) is located at residues 1–44; it reads MKKIRKLTEADVTAESAFFMQRRQVLKALGISAAALSLPNAAHA. Residues Asn-88, 91–92, Cys-146, Thr-181, Asn-233, Arg-238, and 249–251 each bind Mo-molybdopterin; these read YE and GIK.

It belongs to the MsrP family. As to quaternary structure, heterodimer of a catalytic subunit (MsrP) and a heme-binding subunit (MsrQ). The cofactor is Mo-molybdopterin. Post-translationally, predicted to be exported by the Tat system. The position of the signal peptide cleavage has not been experimentally proven.

It is found in the periplasm. The catalysed reaction is L-methionyl-[protein] + a quinone + H2O = L-methionyl-(S)-S-oxide-[protein] + a quinol. The enzyme catalyses L-methionyl-[protein] + a quinone + H2O = L-methionyl-(R)-S-oxide-[protein] + a quinol. Functionally, part of the MsrPQ system that repairs oxidized periplasmic proteins containing methionine sulfoxide residues (Met-O), using respiratory chain electrons. Thus protects these proteins from oxidative-stress damage caused by reactive species of oxygen and chlorine generated by the host defense mechanisms. MsrPQ is essential for the maintenance of envelope integrity under bleach stress, rescuing a wide series of structurally unrelated periplasmic proteins from methionine oxidation, including the primary periplasmic chaperone SurA and the lipoprotein Pal. The catalytic subunit MsrP is non-stereospecific, being able to reduce both (R-) and (S-) diastereoisomers of methionine sulfoxide. The sequence is that of Protein-methionine-sulfoxide reductase catalytic subunit MsrP from Escherichia fergusonii (strain ATCC 35469 / DSM 13698 / CCUG 18766 / IAM 14443 / JCM 21226 / LMG 7866 / NBRC 102419 / NCTC 12128 / CDC 0568-73).